The following is a 452-amino-acid chain: Probable E3 ubiquitin-protein ligase ARI15 (452 aa).

Positions 22-256 are TRIAD supradomain; that stretch reads SRVYCGICSN…GTSGSCLAPA (235 aa). C26, C29, C54, H56, C59, C62, C83, C88, C128, C133, C154, C156, C161, C164, H169, C174, C208, C211, C229, C231, C236, C239, H246, and C252 together coordinate Zn(2+). An RING-type 1 zinc finger spans residues 26 to 88; it reads CGICSNIGDD…TAISCPDRDC (63 aa). The segment at 106 to 174 adopts an IBR-type zinc-finger fold; the sequence is AMYELYILKS…MLESHRPVTC (69 aa). The RING-type 2; atypical zinc-finger motif lies at 208 to 239; it reads CPHCFIPVEIDGERPWAQFLTCVCSGRFCWKC. A RanBP2-type zinc finger spans residues 414 to 445; that stretch reads NYGGPYWLCDRCTYGNSWFQRACKMCCDPTAS.

The protein belongs to the RBR family. Ariadne subfamily. It depends on Zn(2+) as a cofactor. As to expression, ubiquitous.

The enzyme catalyses [E2 ubiquitin-conjugating enzyme]-S-ubiquitinyl-L-cysteine + [acceptor protein]-L-lysine = [E2 ubiquitin-conjugating enzyme]-L-cysteine + [acceptor protein]-N(6)-ubiquitinyl-L-lysine.. Its pathway is protein modification; protein ubiquitination. Might act as an E3 ubiquitin-protein ligase, or as part of E3 complex, which accepts ubiquitin from specific E2 ubiquitin-conjugating enzymes and then transfers it to substrates. The polypeptide is Probable E3 ubiquitin-protein ligase ARI15 (ARI15) (Arabidopsis thaliana (Mouse-ear cress)).